Consider the following 376-residue polypeptide: MSDSKEPRVQQLGLLEEDPTTSGIRLFPRDFQFQQIHGHKSSTGCLGHGALVLQLLSFTLLAGVLVAILVQVSKVPSSLSQEQSEQDAIYQNLTQLKAAVGELSEKSKLQEIYQELTQLKAAVGELPEKSKLQEIYQELTQLKAAVGELPEKSKLQEIYQELTQLKAAVGELPEKSKLQEIYQELTRLKAAVGELPEKSKLQEIYQELTQLKAALGKLPDQSKQQQIYQELTDLKTAFERLCRHCPKDWTFFQGNCYFMSNSQRNWHNSVTACQEVRAQLVVIKSAEEQNFLQLQTSRSNRFSWMGLSDLNQEGTWQWVDGSPLSPSFQRYWNSGEPNNSGNEDCAEFSGSGWNDNRCDVDNYWICKKPTVCFRDE.

Topologically, residues 1–49 (MSDSKEPRVQQLGLLEEDPTTSGIRLFPRDFQFQQIHGHKSSTGCLGHG) are cytoplasmic. Positions 14–15 (LL) match the Endocytosis signal motif. A helical; Signal-anchor for type II membrane protein membrane pass occupies residues 50–70 (ALVLQLLSFTLLAGVLVAILV). The Extracellular portion of the chain corresponds to 71–376 (QVSKVPSSLS…KKPTVCFRDE (306 aa)). The N-linked (GlcNAc...) asparagine glycan is linked to N92. 6 tandem repeats follow at residues 108-130 (KLQEIYQELTQLKAAVGELPEKS), 131-153 (KLQEIYQELTQLKAAVGELPEKS), 154-176 (KLQEIYQELTQLKAAVGELPEKS), 177-199 (KLQEIYQELTRLKAAVGELPEKS), 200-222 (KLQEIYQELTQLKAALGKLPDQS), and 223-245 (KQQQIYQELTDLKTAFERLCRHC). Residues 108 to 246 (KLQEIYQELT…AFERLCRHCP (139 aa)) form a 6 X approximate tandem repeats region. Disulfide bonds link C242–C372, C245–C256, C273–C366, and C345–C358. The region spanning 251-367 (FFQGNCYFMS…CDVDNYWICK (117 aa)) is the C-type lectin domain. Ca(2+) is bound by residues E336, N338, S340, E343, N354, and D355. N-linked (GlcNAc...) asparagine glycosylation occurs at N338.

In terms of assembly, homotetramer.

It is found in the membrane. Its function is as follows. Probable pathogen-recognition receptor involved in peripheral immune surveillance in liver. May mediate the endocytosis of pathogens which are subsequently degraded in lysosomal compartments. Probably recognizes in a calcium-dependent manner high mannose N-linked oligosaccharides in a variety of pathogen antigens. Is a receptor for ICAM3, probably by binding to mannose-like carbohydrates. The chain is C-type lectin domain family 4 member M (CLEC4M) from Gorilla gorilla gorilla (Western lowland gorilla).